The primary structure comprises 158 residues: Transcription elongation factor GreA (158 aa).

A coiled-coil region spans residues 4–70 (QKQYPMTQEG…IEQDIQRIEH (67 aa)).

Belongs to the GreA/GreB family.

Necessary for efficient RNA polymerase transcription elongation past template-encoded arresting sites. The arresting sites in DNA have the property of trapping a certain fraction of elongating RNA polymerases that pass through, resulting in locked ternary complexes. Cleavage of the nascent transcript by cleavage factors such as GreA or GreB allows the resumption of elongation from the new 3'terminus. GreA releases sequences of 2 to 3 nucleotides. In Staphylococcus aureus (strain Mu3 / ATCC 700698), this protein is Transcription elongation factor GreA.